Reading from the N-terminus, the 322-residue chain is CXXC-type zinc finger protein 5 (322 aa).

Positions 1–10 (MSSLGGGSQD) are enriched in gly residues. The disordered stretch occupies residues 1–100 (MSSLGGGSQD…SGGGSMMGGE (100 aa)). 2 stretches are compositionally biased toward low complexity: residues 11–20 (AGGSSSSSTN) and 28–52 (SGPK…VADD). The residue at position 53 (Thr-53) is a Phosphothreonine. Positions 87 to 97 (SSGGSGGGSMM) are enriched in gly residues. The CXXC-type zinc finger occupies 256–297 (GKKKRKRCGMCAPCRRRINCEQCSSCRNRKTGHQICKFRKCE). Positions 257-262 (KKKRKR) match the Nuclear localization signal motif. The Zn(2+) site is built by Cys-263, Cys-266, Cys-269, Cys-275, Cys-278, Cys-281, Cys-291, and Cys-296.

Interacts with DVL1. Interacts with RBPJ.

It is found in the nucleus. It localises to the cytoplasm. May indirectly participate in activation of the NF-kappa-B and MAPK pathways. Acts as a mediator of BMP4-mediated modulation of canonical Wnt signaling activity in neural stem cells. Required for DNA damage-induced ATM phosphorylation, p53 activation and cell cycle arrest. Involved in myelopoiesis. Binds to the oxygen responsive element of COX4I2 and represses its transcription under hypoxia conditions (4% oxygen), as well as normoxia conditions (20% oxygen). May repress COX4I2 transactivation induced by CHCHD2 and RBPJ. Binds preferentially to DNA containing cytidine-phosphate-guanosine (CpG) dinucleotides over CpH (H=A, T, and C), hemimethylated-CpG and hemimethylated-hydroxymethyl-CpG. In Pongo abelii (Sumatran orangutan), this protein is CXXC-type zinc finger protein 5 (CXXC5).